The chain runs to 620 residues: Chaperone protein HscA homolog (620 aa).

It belongs to the heat shock protein 70 family.

Functionally, chaperone involved in the maturation of iron-sulfur cluster-containing proteins. Has a low intrinsic ATPase activity which is markedly stimulated by HscB. The sequence is that of Chaperone protein HscA homolog from Bordetella petrii (strain ATCC BAA-461 / DSM 12804 / CCUG 43448).